A 2025-amino-acid chain; its full sequence is E3 ubiquitin-protein ligase TRIP12 (2025 aa).

A compositionally biased stretch (polar residues) spans 1 to 10 (MSNRPNNNPG). Residues 1-404 (MSNRPNNNPG…SGESESDDSE (404 aa)) are disordered. Serine 2 carries the N-acetylserine modification. Serine 12 is modified (phosphoserine). Polar residues predominate over residues 18 to 27 (RNTAGAQPQD). Residues 48-70 (DPDRANTSERQKTGQVPKKDNSR) show a composition bias toward basic and acidic residues. 3 positions are modified to phosphoserine: serine 77, serine 85, and serine 100. Composition is skewed to polar residues over residues 78–88 (PDYNRTNSPSS), 99–108 (ESLSETNKPP), and 119–132 (EQQLKSAQLPSTSK). Low complexity-rich tracts occupy residues 154–166 (SSCVKSGSGSEST) and 175–216 (PTKL…SSTV). An N6-acetyllysine modification is found at lysine 181. Residues 280 to 290 (PGSSKSETSKP) are compositionally biased toward polar residues. Phosphoserine is present on residues serine 310 and serine 312. Residues 326 to 338 (QKTTGSCASTSRR) are compositionally biased toward polar residues. Residues 346 to 358 (GAAEARRQEKMAD) are compositionally biased toward basic and acidic residues. A compositionally biased stretch (polar residues) spans 362 to 371 (NQETVNSSAA). Over residues 379 to 397 (GAAASSSVAGAVGMTTSGE) the composition is skewed to low complexity. Positions 755-869 (MLKKGNAQNT…DPELAKSFIK (115 aa)) constitute a WWE domain. Residues 970-1077 (ESLLTSPPKA…QSPKSSFLAS (108 aa)) are disordered. Position 975 is a phosphoserine (serine 975). Positions 983 to 1006 (GSGSLGSTTPASSGTATAATNASA) are enriched in low complexity. Serine 1024 and serine 1030 each carry phosphoserine. The span at 1034 to 1047 (KRKRLPKRGPRRPK) shows a compositional bias: basic residues. Serine 1049 is modified (phosphoserine). Over residues 1050-1059 (PPRDDDKVDN) the composition is skewed to basic and acidic residues. The span at 1062-1073 (KSPTTTQSPKSS) shows a compositional bias: low complexity. 5 positions are modified to phosphoserine: serine 1063, serine 1350, serine 1355, serine 1362, and serine 1409. Position 1410 is a phosphothreonine (threonine 1410). Disordered stretches follow at residues 1440-1466 (SSKDCVGGKRGRAQTAPTKTSPRNAKK) and 1601-1620 (TNPEINQSDSQDSRVAPRLD). Lysine 1458 is subject to N6-acetyllysine. Serine 1460 is modified (phosphoserine). The K-box stretch occupies residues 1529–1603 (EIIPTSEFIN…AMQRLLDTNP (75 aa)). An HECT domain is found at 1918–2025 (PDHGYTHDSR…REGQQSFHLS (108 aa)). The active-site Glycyl thioester intermediate is cysteine 1992.

Belongs to the UPL family. K-HECT subfamily. Interacts with MYC; leading to disrupt interaction with isoform p19ARF/ARF of CDKN2A. Interacts with TRADD; leading to disrupt interaction with isoform p19ARF/ARF of CDKN2A. Interacts with SMARCC1; leading to disrupt interaction with SMARCE1.

It localises to the nucleus. The protein localises to the nucleoplasm. It carries out the reaction S-ubiquitinyl-[E2 ubiquitin-conjugating enzyme]-L-cysteine + [acceptor protein]-L-lysine = [E2 ubiquitin-conjugating enzyme]-L-cysteine + N(6)-ubiquitinyl-[acceptor protein]-L-lysine.. The protein operates within protein modification; protein ubiquitination. Its function is as follows. E3 ubiquitin-protein ligase involved in ubiquitin fusion degradation (UFD) pathway and regulation of DNA repair. Part of the ubiquitin fusion degradation (UFD) pathway, a process that mediates ubiquitination of protein at their N-terminus, regardless of the presence of lysine residues in target proteins. Acts as a key regulator of DNA damage response by acting as a suppressor of RNF168, an E3 ubiquitin-protein ligase that promotes accumulation of 'Lys-63'-linked histone H2A and H2AX at DNA damage sites, thereby acting as a guard against excessive spreading of ubiquitinated chromatin at damaged chromosomes. In normal cells, mediates ubiquitination and degradation of isoform p19ARF/ARF of CDKN2A, a lysine-less tumor suppressor required for p53/TP53 activation under oncogenic stress. In cancer cells, however, isoform p19ARF/ARF and TRIP12 are located in different cell compartments, preventing isoform p19ARF/ARF ubiquitination and degradation. Does not mediate ubiquitination of isoform p16-INK4a of CDKN2A. Also catalyzes ubiquitination of NAE1 and SMARCE1, leading to their degradation. Ubiquitination and degradation of target proteins is regulated by interaction with proteins such as MYC, TRADD or SMARCC1, which disrupt the interaction between TRIP12 and target proteins. Mediates ubiquitination of ASXL1: following binding to N(6)-methyladenosine methylated DNA, ASXL1 is ubiquitinated by TRIP12, leading to its degradation and subsequent inactivation of the PR-DUB complex. The chain is E3 ubiquitin-protein ligase TRIP12 (Trip12) from Rattus norvegicus (Rat).